The sequence spans 95 residues: Complement inhibitor RaCI5 (95 aa).

The signal sequence occupies residues Met1–Ser21. Intrachain disulfides connect Cys35/Cys59, Cys40/Cys61, and Cys55/Cys76.

It belongs to the RaCI family. As to expression, expressed in salivary glands.

It is found in the secreted. Functionally, complement inhibitor. Prevents complement-mediated C5 activation by binding to C5. Binds C5 at a different binding site than the other tick complement inhibitors OmCI and CirpT1, and the drug eculizumab. The chain is Complement inhibitor RaCI5 from Rhipicephalus appendiculatus (Brown ear tick).